Here is a 216-residue protein sequence, read N- to C-terminus: Imidazoleglycerol-phosphate dehydratase (216 aa).

Ser-211 is modified (phosphoserine).

This sequence belongs to the imidazoleglycerol-phosphate dehydratase family.

It catalyses the reaction D-erythro-1-(imidazol-4-yl)glycerol 3-phosphate = 3-(imidazol-4-yl)-2-oxopropyl phosphate + H2O. Its pathway is amino-acid biosynthesis; L-histidine biosynthesis; L-histidine from 5-phospho-alpha-D-ribose 1-diphosphate: step 6/9. The sequence is that of Imidazoleglycerol-phosphate dehydratase (his5) from Schizosaccharomyces pombe (strain 972 / ATCC 24843) (Fission yeast).